We begin with the raw amino-acid sequence, 79 residues long: Sulfur carrier protein TusA (79 aa).

The active-site Cysteine persulfide intermediate is the cysteine 17.

This sequence belongs to the sulfur carrier protein TusA family.

Its subcellular location is the cytoplasm. Its function is as follows. Sulfur carrier protein which probably makes part of a sulfur-relay system. This Actinobacillus pleuropneumoniae serotype 7 (strain AP76) protein is Sulfur carrier protein TusA.